Reading from the N-terminus, the 187-residue chain is Large ribosomal subunit protein uL10 (187 aa).

This sequence belongs to the universal ribosomal protein uL10 family. As to quaternary structure, part of the ribosomal stalk of the 50S ribosomal subunit. The N-terminus interacts with L11 and the large rRNA to form the base of the stalk. The C-terminus forms an elongated spine to which L12 dimers bind in a sequential fashion forming a multimeric L10(L12)X complex.

Functionally, forms part of the ribosomal stalk, playing a central role in the interaction of the ribosome with GTP-bound translation factors. The chain is Large ribosomal subunit protein uL10 from Synechococcus sp. (strain JA-2-3B'a(2-13)) (Cyanobacteria bacterium Yellowstone B-Prime).